The following is a 298-amino-acid chain: Ectoine dioxygenase (298 aa).

Residues 1-18 (MLQQAIDRDPVDRIDRYP) show a composition bias toward basic and acidic residues. The tract at residues 1–26 (MLQQAIDRDPVDRIDRYPTRTAEPAP) is disordered. Gln133 serves as a coordination point for L-ectoine. His150, Asp152, and His251 together coordinate Fe cation.

This sequence belongs to the PhyH family. EctD subfamily. In terms of assembly, homodimer. Fe(2+) is required as a cofactor.

The enzyme catalyses L-ectoine + 2-oxoglutarate + O2 = 5-hydroxyectoine + succinate + CO2. Functionally, involved in the biosynthesis of 5-hydroxyectoine, called compatible solute, which helps organisms to survive extreme osmotic stress by acting as a highly soluble organic osmolyte. Catalyzes the 2-oxoglutarate-dependent selective hydroxylation of L-ectoine to yield (4S,5S)-5-hydroxyectoine. This is Ectoine dioxygenase from Nocardia farcinica (strain IFM 10152).